A 112-amino-acid polypeptide reads, in one-letter code: Large ribosomal subunit protein bL17 (112 aa).

This sequence belongs to the bacterial ribosomal protein bL17 family. As to quaternary structure, part of the 50S ribosomal subunit. Contacts protein L32.

In Heliobacterium modesticaldum (strain ATCC 51547 / Ice1), this protein is Large ribosomal subunit protein bL17.